Here is a 521-residue protein sequence, read N- to C-terminus: Cytochrome P450 1A1 (521 aa).

Residue Phe-229 participates in substrate binding. A heme-binding site is contributed by Cys-463.

It belongs to the cytochrome P450 family. It depends on heme as a cofactor.

It localises to the endoplasmic reticulum membrane. It is found in the microsome membrane. It carries out the reaction an organic molecule + reduced [NADPH--hemoprotein reductase] + O2 = an alcohol + oxidized [NADPH--hemoprotein reductase] + H2O + H(+). Its function is as follows. Cytochromes P450 are a group of heme-thiolate monooxygenases. They oxidize a variety of structurally unrelated compounds, including steroids, fatty acids, and xenobiotics. The chain is Cytochrome P450 1A1 (cyp1a1) from Sparus aurata (Gilthead sea bream).